Here is a 66-residue protein sequence, read N- to C-terminus: Large ribosomal subunit protein bL32 (66 aa).

The disordered stretch occupies residues Met-1–His-20.

It belongs to the bacterial ribosomal protein bL32 family.

The polypeptide is Large ribosomal subunit protein bL32 (Leptospira borgpetersenii serovar Hardjo-bovis (strain JB197)).